The following is a 138-amino-acid chain: MNVILQLLKRSSFEDHFRTCCVGTIHEELRKILSGEKDVVGDLRRMHSYSKLHKGRNMCTTALKVLMKDLAAECKRNTEVKVLHPTRFKSHLVCSAQGCKNPTIPDKPYFKVALPSGKAFTDMVVQKHHHLPIAPQIF.

This is an uncharacterized protein from Caenorhabditis elegans.